Consider the following 134-residue polypeptide: Large-conductance mechanosensitive channel (134 aa).

2 helical membrane-spanning segments follow: residues 16–36 (VVDMAVGIIIGVAFGKIVSSF) and 76–96 (GVFLQAIFDFIIIAFAIFIAV).

Belongs to the MscL family. In terms of assembly, homopentamer.

The protein localises to the cell inner membrane. Its function is as follows. Channel that opens in response to stretch forces in the membrane lipid bilayer. May participate in the regulation of osmotic pressure changes within the cell. The sequence is that of Large-conductance mechanosensitive channel from Thioalkalivibrio sulfidiphilus (strain HL-EbGR7).